A 452-amino-acid polypeptide reads, in one-letter code: tRNA modification GTPase MnmE (452 aa).

(6S)-5-formyl-5,6,7,8-tetrahydrofolate is bound by residues R21, E78, and K118. In terms of domain architecture, TrmE-type G spans 214 to 375; that stretch reads GMKVVIAGRP…LREHLKQSMG (162 aa). Position 224 (N224) interacts with K(+). Residues 224 to 229, 243 to 249, and 268 to 271 contribute to the GTP site; these read NAGKSS, TDIAGTT, and DTAG. S228 provides a ligand contact to Mg(2+). 3 residues coordinate K(+): T243, I245, and T248. Position 249 (T249) interacts with Mg(2+). Residue K452 coordinates (6S)-5-formyl-5,6,7,8-tetrahydrofolate.

This sequence belongs to the TRAFAC class TrmE-Era-EngA-EngB-Septin-like GTPase superfamily. TrmE GTPase family. As to quaternary structure, homodimer. Heterotetramer of two MnmE and two MnmG subunits. Requires K(+) as cofactor.

The protein localises to the cytoplasm. Exhibits a very high intrinsic GTPase hydrolysis rate. Involved in the addition of a carboxymethylaminomethyl (cmnm) group at the wobble position (U34) of certain tRNAs, forming tRNA-cmnm(5)s(2)U34. This Actinobacillus succinogenes (strain ATCC 55618 / DSM 22257 / CCUG 43843 / 130Z) protein is tRNA modification GTPase MnmE.